Here is a 148-residue protein sequence, read N- to C-terminus: Small ribosomal subunit protein uS15 (148 aa).

Positions 1–14 are enriched in basic residues; sequence MGRLHSHRHGKSHS. A disordered region spans residues 1–27; it reads MGRLHSHRHGKSHSIRPSSPKAPSWIQ.

The protein belongs to the universal ribosomal protein uS15 family. Part of the 30S ribosomal subunit.

This Cenarchaeum symbiosum (strain A) protein is Small ribosomal subunit protein uS15.